We begin with the raw amino-acid sequence, 512 residues long: Mesoderm induction early response protein 1 (512 aa).

Residues 1 to 16 are compositionally biased toward low complexity; sequence MAEPSVESSSPGGSAT. 2 disordered regions span residues 1-63 and 75-173; these read MAEP…REGD and YGST…EDYI. Position 10 is a phosphoserine (serine 10). Basic and acidic residues predominate over residues 17–36; sequence SDDHEFDPSADMLVHDFDDE. Acidic residues-rich tracts occupy residues 37–46 and 83–105; these read RTLEEEEMME and EEDE…DNDD. Polar residues predominate over residues 129–144; it reads QSSNDDPSQSVASQDA. Serine 141 is subject to Phosphoserine. Tyrosine 155 bears the Phosphotyrosine mark. Serine 160 and serine 166 each carry phosphoserine. The span at 160–173 shows a compositional bias: acidic residues; it reads SEVEEESEEDEDYI. In terms of domain architecture, ELM2 spans 180-278; sequence KEIMVGSMFQ…EALRRLRFNV (99 aa). The segment at 180-284 is interaction with HDAC1; that stretch reads KEIMVGSMFQ…RFNVKAAREE (105 aa). A Glycyl lysine isopeptide (Lys-Gly) (interchain with G-Cter in SUMO2) cross-link involves residue lysine 239. The SANT domain maps to 283–335; it reads EELSVWTEEECRNFEQGLKAYGKDFHLIQANKVRTRSVGECVAFYYMWKKSER. Positions 366–512 are disordered; it reads ESESAASSRA…KFEELENTDD (147 aa). A phosphoserine mark is found at serine 367, serine 369, and serine 377. Polar residues predominate over residues 396 to 409; the sequence is TVSTANQNGVSSNG. A compositionally biased stretch (basic and acidic residues) spans 414–423; sequence LNKEEVKVEG. Residue lysine 420 forms a Glycyl lysine isopeptide (Lys-Gly) (interchain with G-Cter in SUMO2) linkage. Threonine 448 is subject to Phosphothreonine. Over residues 462–475 the composition is skewed to basic and acidic residues; the sequence is ARNENDFDEKSERP. The segment covering 482–494 has biased composition (polar residues); sequence NSNGKESPGSSEF. Phosphoserine is present on residues serine 483, serine 488, and serine 491.

As to quaternary structure, interacts with HDAC1. Part of a complex containing at least CDYL, MIER1, MIER2, HDAC1 and HDAC2. In terms of tissue distribution, ubiquitously expressed, but at very low levels. However, consistent level of expression are observed in heart, testis, thyroid, ovary and adrenal gland. Transcripts are up-regulated in breast carcinoma cell lines and tumor.

The protein localises to the nucleus. The protein resides in the cytoplasm. Functionally, transcriptional repressor regulating the expression of a number of genes including SP1 target genes. Probably functions through recruitment of HDAC1 a histone deacetylase involved in chromatin silencing. The chain is Mesoderm induction early response protein 1 (MIER1) from Homo sapiens (Human).